The chain runs to 438 residues: Elongation factor 1-alpha (438 aa).

The tr-type G domain maps to 6–229 (KPHLNIVIIG…ALDTLEVPPK (224 aa)). The tract at residues 15–22 (GHVDHGKS) is G1. 15–22 (GHVDHGKS) lines the GTP pocket. Residue serine 22 coordinates Mg(2+). A G2 region spans residues 71–75 (GVTIS). The segment at 92–95 (DAPG) is G3. GTP is bound by residues 92–96 (DAPGH) and 154–157 (NKMD). Residues 154–157 (NKMD) form a G4 region. A G5 region spans residues 195–197 (SAW).

It belongs to the TRAFAC class translation factor GTPase superfamily. Classic translation factor GTPase family. EF-Tu/EF-1A subfamily.

It localises to the cytoplasm. It catalyses the reaction GTP + H2O = GDP + phosphate + H(+). Its function is as follows. GTP hydrolase that promotes the GTP-dependent binding of aminoacyl-tRNA to the A-site of ribosomes during protein biosynthesis. In Desulfurococcus mucosus (Desulfurococcus mobilis), this protein is Elongation factor 1-alpha.